A 486-amino-acid chain; its full sequence is Deleted in azoospermia protein 3 (486 aa).

The segment covering 1 to 10 (MSAANPETPN) has biased composition (polar residues). Residues 1-27 (MSAANPETPNSTISREASTQSSSAAAS) form a disordered region. Positions 11–27 (STISREASTQSSSAAAS) are enriched in low complexity. The RRM domain occupies 40–115 (NTVFVGGIDA…KKLKLGPAIR (76 aa)). 12 DAZ domains span residues 167 to 190 (AYSA…YNYQ), 191 to 214 (EYPT…YNYQ), 215 to 238 (PFPA…YNYQ), 239 to 262 (AFPA…YNYQ), 263 to 286 (PFPA…YNYQ), 287 to 310 (AFPA…YNYQ), 311 to 334 (AFPA…YNYQ), 335 to 358 (AFPA…YNYQ), 359 to 382 (AFPA…YNYQ), 383 to 406 (AFPA…YNYQ), 407 to 430 (AFPA…YNYQ), and 431 to 454 (AFPA…YNYQ).

It belongs to the RRM DAZ family. In terms of assembly, forms a heterodimer with BOLL and DAZL. Interacts with PUM2, DAZAP1, DAZAP2, DZIP1 and DZIP3. Testis specific.

It localises to the cytoplasm. The protein resides in the nucleus. Its function is as follows. RNA-binding protein that plays an essential role in spermatogenesis. May act by binding to the 3'-UTR of mRNAs and regulating their translation. The protein is Deleted in azoospermia protein 3 (DAZ3) of Homo sapiens (Human).